The sequence spans 35 residues: Photosystem II reaction center protein T (35 aa).

Residues 3-23 form a helical membrane-spanning segment; sequence ALVYTFLLVSTLGIIFFAIFF.

The protein belongs to the PsbT family. As to quaternary structure, PSII is composed of 1 copy each of membrane proteins PsbA, PsbB, PsbC, PsbD, PsbE, PsbF, PsbH, PsbI, PsbJ, PsbK, PsbL, PsbM, PsbT, PsbY, PsbZ, Psb30/Ycf12, at least 3 peripheral proteins of the oxygen-evolving complex and a large number of cofactors. It forms dimeric complexes.

The protein resides in the plastid. It is found in the chloroplast thylakoid membrane. Functionally, found at the monomer-monomer interface of the photosystem II (PS II) dimer, plays a role in assembly and dimerization of PSII. PSII is a light-driven water plastoquinone oxidoreductase, using light energy to abstract electrons from H(2)O, generating a proton gradient subsequently used for ATP formation. In Cedrus deodara (Deodar cedar), this protein is Photosystem II reaction center protein T.